Consider the following 136-residue polypeptide: Large-conductance mechanosensitive channel (136 aa).

The next 2 membrane-spanning stretches (helical) occupy residues 10 to 30 (FAMR…AAFG) and 76 to 96 (GVFI…FMAI).

The protein belongs to the MscL family. Homopentamer.

The protein resides in the cell inner membrane. Channel that opens in response to stretch forces in the membrane lipid bilayer. May participate in the regulation of osmotic pressure changes within the cell. This Escherichia coli O127:H6 (strain E2348/69 / EPEC) protein is Large-conductance mechanosensitive channel.